Consider the following 334-residue polypeptide: Glucosyltransferase 3 (334 aa).

Residues T16, R179, and S249 to T254 contribute to the UDP site.

The protein belongs to the Gtf3 glucosyltransferase family. As to quaternary structure, homotetramer; a dimer of dimers.

It participates in protein modification; protein glycosylation. Functionally, required for polymorphic O-glycosylation of the serine-rich repeat protein in this bacteria. Catalyzes the second step in glycosylation by transferring glucose from UDP-glucose to the terminal GlcNAc moiety of the 3-O-(N-acetyl-alpha-D-glucosaminyl)-L-seryl-[protein] resulting from the first glycosylation step. In terms of biological role, part of the accessory SecA2/SecY2 system specifically required to export GspB, a serine-rich repeat cell wall protein encoded upstream in the same operon. This chain is Glucosyltransferase 3, found in Streptococcus gordonii.